The primary structure comprises 284 residues: 4-diphosphocytidyl-2-C-methyl-D-erythritol kinase (284 aa).

K14 is an active-site residue. 98 to 108 (PMGGGIGGGSS) provides a ligand contact to ATP. Residue D140 is part of the active site.

It belongs to the GHMP kinase family. IspE subfamily.

The catalysed reaction is 4-CDP-2-C-methyl-D-erythritol + ATP = 4-CDP-2-C-methyl-D-erythritol 2-phosphate + ADP + H(+). The protein operates within isoprenoid biosynthesis; isopentenyl diphosphate biosynthesis via DXP pathway; isopentenyl diphosphate from 1-deoxy-D-xylulose 5-phosphate: step 3/6. Catalyzes the phosphorylation of the position 2 hydroxy group of 4-diphosphocytidyl-2C-methyl-D-erythritol. In Shewanella loihica (strain ATCC BAA-1088 / PV-4), this protein is 4-diphosphocytidyl-2-C-methyl-D-erythritol kinase.